A 109-amino-acid chain; its full sequence is Small ribosomal subunit protein bS6 (109 aa).

Belongs to the bacterial ribosomal protein bS6 family.

Functionally, binds together with bS18 to 16S ribosomal RNA. The protein is Small ribosomal subunit protein bS6 of Ehrlichia chaffeensis (strain ATCC CRL-10679 / Arkansas).